A 206-amino-acid polypeptide reads, in one-letter code: Urease accessory protein UreG (206 aa).

Glycine 14–threonine 21 contributes to the GTP binding site.

It belongs to the SIMIBI class G3E GTPase family. UreG subfamily. As to quaternary structure, homodimer. UreD, UreF and UreG form a complex that acts as a GTP-hydrolysis-dependent molecular chaperone, activating the urease apoprotein by helping to assemble the nickel containing metallocenter of UreC. The UreE protein probably delivers the nickel.

Its subcellular location is the cytoplasm. In terms of biological role, facilitates the functional incorporation of the urease nickel metallocenter. This process requires GTP hydrolysis, probably effectuated by UreG. The polypeptide is Urease accessory protein UreG (Aliivibrio fischeri (strain ATCC 700601 / ES114) (Vibrio fischeri)).